Reading from the N-terminus, the 224-residue chain is MPDCQNTNLPEIILASASPRRQQILREMGFTFSVCPSQAELHPDGSVAPAKFATLNAETKARDIARNTRQGLIIAADTVVVDTLGILGKPASPEEALNYLLRLGGKSHTVISGICLINTQNGQVRSGTCQSSLHMRPFTPAEAQRYVESGLPMDKAGAYGIQDREFEPVEKIEGCYLNVVGLPACTLVRLMKEMGFCPELHDNWQPEGDCTLCRIYRTGINQTC.

The active-site Proton acceptor is Asp-77.

It belongs to the Maf family. YhdE subfamily. Requires a divalent metal cation as cofactor.

The protein localises to the cytoplasm. It carries out the reaction dTTP + H2O = dTMP + diphosphate + H(+). The catalysed reaction is UTP + H2O = UMP + diphosphate + H(+). In terms of biological role, nucleoside triphosphate pyrophosphatase that hydrolyzes dTTP and UTP. May have a dual role in cell division arrest and in preventing the incorporation of modified nucleotides into cellular nucleic acids. The sequence is that of dTTP/UTP pyrophosphatase from Dehalococcoides mccartyi (strain ATCC BAA-2266 / KCTC 15142 / 195) (Dehalococcoides ethenogenes (strain 195)).